The chain runs to 145 residues: MRTTYMAKPGEVERKWYVIDATGVSLGRLSSEVASILRGKNKPQFTPHIDTGDFVIIINAGKIGLTGKKATDKIYYRHSQYPGGLKSRTAGEMRTNNPEKLLELSIKGMLPKNSLGRQLFKKLHVYGGSEHEHAAQQPEVYELRG.

It belongs to the universal ribosomal protein uL13 family. Part of the 50S ribosomal subunit.

In terms of biological role, this protein is one of the early assembly proteins of the 50S ribosomal subunit, although it is not seen to bind rRNA by itself. It is important during the early stages of 50S assembly. The chain is Large ribosomal subunit protein uL13 from Listeria monocytogenes serotype 4b (strain CLIP80459).